Reading from the N-terminus, the 124-residue chain is Ribonuclease P protein component (124 aa).

Belongs to the RnpA family. Consists of a catalytic RNA component (M1 or rnpB) and a protein subunit.

The enzyme catalyses Endonucleolytic cleavage of RNA, removing 5'-extranucleotides from tRNA precursor.. In terms of biological role, RNaseP catalyzes the removal of the 5'-leader sequence from pre-tRNA to produce the mature 5'-terminus. It can also cleave other RNA substrates such as 4.5S RNA. The protein component plays an auxiliary but essential role in vivo by binding to the 5'-leader sequence and broadening the substrate specificity of the ribozyme. The polypeptide is Ribonuclease P protein component (Mycolicibacterium gilvum (strain PYR-GCK) (Mycobacterium gilvum (strain PYR-GCK))).